The sequence spans 361 residues: Peptide chain release factor 1 (361 aa).

Glutamine 236 carries the post-translational modification N5-methylglutamine.

The protein belongs to the prokaryotic/mitochondrial release factor family. Post-translationally, methylated by PrmC. Methylation increases the termination efficiency of RF1.

The protein resides in the cytoplasm. Functionally, peptide chain release factor 1 directs the termination of translation in response to the peptide chain termination codons UAG and UAA. The polypeptide is Peptide chain release factor 1 (Lactobacillus acidophilus (strain ATCC 700396 / NCK56 / N2 / NCFM)).